A 133-amino-acid chain; its full sequence is Small ribosomal subunit protein uS8 (133 aa).

This sequence belongs to the universal ribosomal protein uS8 family. In terms of assembly, part of the 30S ribosomal subunit. Contacts proteins S5 and S12.

In terms of biological role, one of the primary rRNA binding proteins, it binds directly to 16S rRNA central domain where it helps coordinate assembly of the platform of the 30S subunit. The polypeptide is Small ribosomal subunit protein uS8 (Amoebophilus asiaticus (strain 5a2)).